A 317-amino-acid polypeptide reads, in one-letter code: Probable deoxyhypusine synthase (317 aa).

Catalysis depends on K285, which acts as the Nucleophile.

Belongs to the deoxyhypusine synthase family. NAD(+) serves as cofactor.

The enzyme catalyses [eIF5A protein]-L-lysine + spermidine = [eIF5A protein]-deoxyhypusine + propane-1,3-diamine. Its pathway is protein modification; eIF5A hypusination. In terms of biological role, catalyzes the NAD-dependent oxidative cleavage of spermidine and the subsequent transfer of the butylamine moiety of spermidine to the epsilon-amino group of a specific lysine residue of the eIF-5A precursor protein to form the intermediate deoxyhypusine residue. This is Probable deoxyhypusine synthase (dys) from Methanosarcina thermophila.